Reading from the N-terminus, the 329-residue chain is NADH-quinone oxidoreductase subunit H (329 aa).

9 helical membrane-spanning segments follow: residues 9-29 (LIKILILVAVFSALGGFATYI), 42-62 (GPCYVGPFGLLQVAADGIKLF), 75-95 (FIFTLAPIIAMVSAFVSMAPI), 117-137 (IGFLFFLAVGAAGIYAPILAG), 154-174 (IQLLSFEVVSTLTILAPLMVV), 188-208 (GGFLDWLVFKQPLAFVLFLIA), 238-258 (LKWGMFFLAEYAHLFAFSFVI), 260-280 (IVFFGGFNAWGFIPGGLAILI), and 309-329 (WKIMLPLALLNIVLTGIIILI).

This sequence belongs to the complex I subunit 1 family. As to quaternary structure, NDH-1 is composed of 14 different subunits. Subunits NuoA, H, J, K, L, M, N constitute the membrane sector of the complex.

It localises to the cell inner membrane. It catalyses the reaction a quinone + NADH + 5 H(+)(in) = a quinol + NAD(+) + 4 H(+)(out). Functionally, NDH-1 shuttles electrons from NADH, via FMN and iron-sulfur (Fe-S) centers, to quinones in the respiratory chain. The immediate electron acceptor for the enzyme in this species is believed to be ubiquinone. Couples the redox reaction to proton translocation (for every two electrons transferred, four hydrogen ions are translocated across the cytoplasmic membrane), and thus conserves the redox energy in a proton gradient. This subunit may bind ubiquinone. In Helicobacter pylori (strain G27), this protein is NADH-quinone oxidoreductase subunit H.